The chain runs to 776 residues: Venom dipeptidyl peptidase 4 (776 aa).

Positions 1–19 (MVPLRSFVLLNGLFFVLLA) are cleaved as a signal peptide. N-linked (GlcNAc...) asparagine glycans are attached at residues Asn-44, Asn-66, and Asn-329. Cystine bridges form between Cys-449–Cys-452 and Cys-462–Cys-480. 2 N-linked (GlcNAc...) asparagine glycosylation sites follow: Asn-504 and Asn-577. Ser-638 (charge relay system) is an active-site residue. A disulfide bridge connects residues Cys-658 and Cys-769. Asn-693 carries an N-linked (GlcNAc...) asparagine glycan. Residues Asp-717 and His-749 each act as charge relay system in the active site.

This sequence belongs to the peptidase S9B family. DPPIV subfamily. As to expression, expressed by the venom gland.

The protein resides in the secreted. The catalysed reaction is Release of an N-terminal dipeptide, Xaa-Yaa-|-Zaa-, from a polypeptide, preferentially when Yaa is Pro, provided Zaa is neither Pro nor hydroxyproline.. Its function is as follows. Venom dipeptidyl-peptidase which removes N-terminal dipeptides sequentially from polypeptides having unsubstituted N-termini provided that the penultimate residue is proline. May process venom proteins into their active forms and/or modulate the chemotactic activity of immune cells after the insect sting. The polypeptide is Venom dipeptidyl peptidase 4 (Vespa velutina (Asian yellow-legged hornet)).